Reading from the N-terminus, the 392-residue chain is tRNA (guanine(26)-N(2)/guanine(27)-N(2))-dimethyltransferase (392 aa).

Residues 2–375 (EIVQEGIAKI…LSFEEVMKKM (374 aa)) form the Trm1 methyltransferase domain. Arg36, Arg66, Asp84, Glu113, and Ala114 together coordinate S-adenosyl-L-methionine. Positions 247, 250, 266, and 269 each coordinate Zn(2+).

It belongs to the class I-like SAM-binding methyltransferase superfamily. Trm1 family.

The enzyme catalyses guanosine(26)/guanosine(27) in tRNA + 4 S-adenosyl-L-methionine = N(2)-dimethylguanosine(26)/N(2)-dimethylguanosine(27) in tRNA + 4 S-adenosyl-L-homocysteine + 4 H(+). Its function is as follows. Dimethylates the guanine residues at position 26 and 27 of one or more tRNAs using S-adenosyl-L-methionine as donor of the methyl groups. In Aquifex aeolicus (strain VF5), this protein is tRNA (guanine(26)-N(2)/guanine(27)-N(2))-dimethyltransferase.